The primary structure comprises 272 residues: Undecaprenyl-diphosphatase (272 aa).

The next 8 membrane-spanning stretches (helical) occupy residues 5–25, 45–65, 88–108, 115–135, 152–171, 189–209, 221–241, and 251–271; these read YSLF…FLPV, AKTF…VVFW, HLTL…GLAF, LFNP…LLAA, TYRQ…WPGF, YAAS…ASGL, GDLP…LIAI, and ISFV…YWVF.

This sequence belongs to the UppP family.

It localises to the cell inner membrane. The catalysed reaction is di-trans,octa-cis-undecaprenyl diphosphate + H2O = di-trans,octa-cis-undecaprenyl phosphate + phosphate + H(+). Functionally, catalyzes the dephosphorylation of undecaprenyl diphosphate (UPP). Confers resistance to bacitracin. The chain is Undecaprenyl-diphosphatase from Yersinia enterocolitica serotype O:8 / biotype 1B (strain NCTC 13174 / 8081).